The primary structure comprises 321 residues: Torsin-2A (321 aa).

The N-terminal stretch at 1 to 26 is a signal peptide; sequence MAVARHGYRPWGSILGLLGLALAAAA. 93-100 is an ATP binding site; it reads GWTGTGKS. N-linked (GlcNAc...) asparagine glycosylation is present at Asn-149.

It belongs to the ClpA/ClpB family. Torsin subfamily. In terms of assembly, homohexamer. Interacts with TOR1AIP1. N-glycosylated. In terms of tissue distribution, expressed at similar levels in liver, muscle and brain (at protein level).

It localises to the endoplasmic reticulum lumen. The polypeptide is Torsin-2A (Tor2a) (Mus musculus (Mouse)).